Here is a 385-residue protein sequence, read N- to C-terminus: ATP synthase subunit a-1 (385 aa).

Positions 1–133 are excised as a propeptide; sequence MRRIFLFDEN…ALNIVGQAAA (133 aa). The next 7 membrane-spanning stretches (helical) occupy residues 154 to 174, 220 to 240, 249 to 269, 276 to 296, 316 to 336, 339 to 359, and 362 to 382; these read FSFTNSSLFMLLTLSFFLLLI, FFPCILVTFLFLLFCNLQGMI, HFLITLALSFSIFIGITIVGF, FFSFLLPAGVPLPLAPFLVLL, MMAGHSLVKILSGFAWTMLCM, IFYFIGALGPLFIVLALTGLE, and VAILQAYVFTILICIYLNDAI.

Belongs to the ATPase A chain family. As to quaternary structure, F-type ATPases have 2 components, CF(1) - the catalytic core - and CF(0) - the membrane proton channel. CF(1) has five subunits: alpha(3), beta(3), gamma(1), delta(1), epsilon(1). CF(0) has three main subunits: a, b and c.

It is found in the mitochondrion inner membrane. Its function is as follows. Mitochondrial membrane ATP synthase (F(1)F(0) ATP synthase or Complex V) produces ATP from ADP in the presence of a proton gradient across the membrane which is generated by electron transport complexes of the respiratory chain. F-type ATPases consist of two structural domains, F(1) - containing the extramembraneous catalytic core and F(0) - containing the membrane proton channel, linked together by a central stalk and a peripheral stalk. During catalysis, ATP synthesis in the catalytic domain of F(1) is coupled via a rotary mechanism of the central stalk subunits to proton translocation. Key component of the proton channel; it may play a direct role in the translocation of protons across the membrane. The chain is ATP synthase subunit a-1 (ATP6-1) from Arabidopsis thaliana (Mouse-ear cress).